Reading from the N-terminus, the 333-residue chain is MDERLLSGESAYEDADLEYSLRPQTLRQYIGQDKAKHNLEVFIEAAKMREETLDHVLLYGPPGLGKTTLANIIANEMGVNIRTTSGPAIERPGDLAAVLTALQPGDVLFIDEIHRLHRSIEEVLYPAMEDFCLDIVIGKGPTARSVRLDLPPFTLVGATTRAGALSAPLRDRFGVLSRLEYYTVDQLSAIVERTAEVFEVEIDSLAALEIARRARGTPRIANRLLRRVRDFAQVRGDGTIAMEITQMALELLQVDKLGLDHIDHKFLLGIIEKFRGGPVGLETVSATIGEESHTIEDVYEPYLLQIGFLQRTPRGRIVTPLAYQHFGMEMPKI.

The tract at residues 1–182 (MDERLLSGES…FGVLSRLEYY (182 aa)) is large ATPase domain (RuvB-L). Residues leucine 21, arginine 22, glycine 63, lysine 66, threonine 67, threonine 68, 129-131 (EDF), arginine 172, tyrosine 182, and arginine 219 each bind ATP. Position 67 (threonine 67) interacts with Mg(2+). Residues 183–253 (TVDQLSAIVE…ITQMALELLQ (71 aa)) form a small ATPAse domain (RuvB-S) region. The head domain (RuvB-H) stretch occupies residues 256-333 (KLGLDHIDHK…QHFGMEMPKI (78 aa)). Residues arginine 311 and arginine 316 each contribute to the DNA site.

It belongs to the RuvB family. Homohexamer. Forms an RuvA(8)-RuvB(12)-Holliday junction (HJ) complex. HJ DNA is sandwiched between 2 RuvA tetramers; dsDNA enters through RuvA and exits via RuvB. An RuvB hexamer assembles on each DNA strand where it exits the tetramer. Each RuvB hexamer is contacted by two RuvA subunits (via domain III) on 2 adjacent RuvB subunits; this complex drives branch migration. In the full resolvosome a probable DNA-RuvA(4)-RuvB(12)-RuvC(2) complex forms which resolves the HJ.

The protein resides in the cytoplasm. The enzyme catalyses ATP + H2O = ADP + phosphate + H(+). The RuvA-RuvB-RuvC complex processes Holliday junction (HJ) DNA during genetic recombination and DNA repair, while the RuvA-RuvB complex plays an important role in the rescue of blocked DNA replication forks via replication fork reversal (RFR). RuvA specifically binds to HJ cruciform DNA, conferring on it an open structure. The RuvB hexamer acts as an ATP-dependent pump, pulling dsDNA into and through the RuvAB complex. RuvB forms 2 homohexamers on either side of HJ DNA bound by 1 or 2 RuvA tetramers; 4 subunits per hexamer contact DNA at a time. Coordinated motions by a converter formed by DNA-disengaged RuvB subunits stimulates ATP hydrolysis and nucleotide exchange. Immobilization of the converter enables RuvB to convert the ATP-contained energy into a lever motion, pulling 2 nucleotides of DNA out of the RuvA tetramer per ATP hydrolyzed, thus driving DNA branch migration. The RuvB motors rotate together with the DNA substrate, which together with the progressing nucleotide cycle form the mechanistic basis for DNA recombination by continuous HJ branch migration. Branch migration allows RuvC to scan DNA until it finds its consensus sequence, where it cleaves and resolves cruciform DNA. The sequence is that of Holliday junction branch migration complex subunit RuvB from Bacillus cytotoxicus (strain DSM 22905 / CIP 110041 / 391-98 / NVH 391-98).